Here is a 199-residue protein sequence, read N- to C-terminus: Chaperone protein TorD (199 aa).

The protein belongs to the TorD/DmsD family. TorD subfamily.

The protein resides in the cytoplasm. Involved in the biogenesis of TorA. Acts on TorA before the insertion of the molybdenum cofactor and, as a result, probably favors a conformation of the apoenzyme that is competent for acquiring the cofactor. This Escherichia coli O45:K1 (strain S88 / ExPEC) protein is Chaperone protein TorD.